The primary structure comprises 274 residues: Long chain fatty acid elongase 2 (274 aa).

Helical transmembrane passes span 29 to 49, 73 to 93, 115 to 135, 140 to 160, 170 to 190, 201 to 221, and 238 to 258; these read MSTF…TIYF, FSLF…GVFM, FWGW…MFLV, PVIF…VVTY, SLAL…VRAL, FITT…GHLV, and VLSI…KFFY.

The protein belongs to the ELO family. Expressed in various tissues and parts of the body, including the ventral cord, pharyngeal muscles, uterus, and the tail, and most strongly in intestinal cells.

Its subcellular location is the membrane. It carries out the reaction hexadecanoyl-CoA + malonyl-CoA + H(+) = 3-oxooctadecanoyl-CoA + CO2 + CoA. It functions in the pathway lipid metabolism; fatty acid biosynthesis. Its function is as follows. Catalyzes the first and rate-limiting reaction of the four reactions that constitute the long-chain fatty acids elongation cycle. Uses malonyl-CoA to add 2 carbons per cycle to the chain of long-chain fatty acids. Condensing enzyme responsible for the elongation of palmitate (hexadecanoate, 16:0), also involved in polyunsaturated fatty acid (PUFA) biosynthesis. This chain is Long chain fatty acid elongase 2, found in Caenorhabditis elegans.